Here is a 554-residue protein sequence, read N- to C-terminus: Putative mediator of RNA polymerase II transcription subunit 29 (554 aa).

Disordered stretches follow at residues 118-301, 330-381, 398-428, and 483-524; these read DNKA…NTEA, QQQQ…PLPQ, LENQSISGNNNNNNDGQTISPQQQQEQLQLQ, and NTNL…DDNT. Low complexity predominate over residues 122 to 210; that stretch reads NTNNNNNNNN…NNSINNNSNN (89 aa). The stretch at 167–194 forms a coiled coil; it reads NNNNNNNYNNNNNNNNNNNNNNNNNNNN. The segment covering 211 to 225 has biased composition (polar residues); it reads KVGSNDNPSTAPITE. The span at 226 to 264 shows a compositional bias: low complexity; sequence NNTENNAGNTNNTNNNNNNNNNNNNNNNNNNNNNNNNTN. Polar residues predominate over residues 265–300; the sequence is QVAESSNISSNTTPPETTNIVNDPNSVSGGNLTNTE. 3 stretches are compositionally biased toward low complexity: residues 330-374, 419-428, and 483-517; these read QQQQ…QQPQ, QQQQEQLQLQ, and NTNLGGNTFNTGTTPPLQQQPQPQQQQQINNPEIN. Positions 419-486 form a coiled coil; the sequence is QQQQEQLQLQ…SLENQINTNL (68 aa).

It belongs to the Mediator complex subunit 29 family. In terms of assembly, component of the Mediator complex.

Its subcellular location is the nucleus. In terms of biological role, component of the Mediator complex, a coactivator involved in the regulated transcription of nearly all RNA polymerase II-dependent genes. Mediator functions as a bridge to convey information from gene-specific regulatory proteins to the basal RNA polymerase II transcription machinery. Mediator is recruited to promoters by direct interactions with regulatory proteins and serves as a scaffold for the assembly of a functional preinitiation complex with RNA polymerase II and the general transcription factors. This Dictyostelium discoideum (Social amoeba) protein is Putative mediator of RNA polymerase II transcription subunit 29 (med29).